We begin with the raw amino-acid sequence, 159 residues long: UPF0262 protein PHZ_c2197 (159 aa).

It belongs to the UPF0262 family.

The chain is UPF0262 protein PHZ_c2197 from Phenylobacterium zucineum (strain HLK1).